A 421-amino-acid polypeptide reads, in one-letter code: Gamma-glutamyl phosphate reductase (421 aa).

It belongs to the gamma-glutamyl phosphate reductase family.

Its subcellular location is the cytoplasm. The catalysed reaction is L-glutamate 5-semialdehyde + phosphate + NADP(+) = L-glutamyl 5-phosphate + NADPH + H(+). It participates in amino-acid biosynthesis; L-proline biosynthesis; L-glutamate 5-semialdehyde from L-glutamate: step 2/2. Functionally, catalyzes the NADPH-dependent reduction of L-glutamate 5-phosphate into L-glutamate 5-semialdehyde and phosphate. The product spontaneously undergoes cyclization to form 1-pyrroline-5-carboxylate. The sequence is that of Gamma-glutamyl phosphate reductase from Herminiimonas arsenicoxydans.